The sequence spans 239 residues: Proteasome subunit beta type-6 (239 aa).

The residue at position 2 (Ala2) is an N-acetylalanine. The propeptide at Ala2–Gly34 is removed in mature form. Thr35 functions as the Nucleophile in the catalytic mechanism. Thr69 carries the post-translational modification Phosphothreonine.

This sequence belongs to the peptidase T1B family. The 26S proteasome consists of a 20S proteasome core and two 19S regulatory subunits. The 20S proteasome core is a barrel-shaped complex made of 28 subunits that are arranged in four stacked rings. The two outer rings are each formed by seven alpha subunits, and the two inner rings are formed by seven beta subunits. The proteolytic activity is exerted by three beta-subunits PSMB5, PSMB6 and PSMB7. As to quaternary structure, (Microbial infection) Interacts with HIV-1 protein Tat.

Its subcellular location is the cytoplasm. The protein resides in the nucleus. The enzyme catalyses Cleavage of peptide bonds with very broad specificity.. Functionally, component of the 20S core proteasome complex involved in the proteolytic degradation of most intracellular proteins. This complex plays numerous essential roles within the cell by associating with different regulatory particles. Associated with two 19S regulatory particles, forms the 26S proteasome and thus participates in the ATP-dependent degradation of ubiquitinated proteins. The 26S proteasome plays a key role in the maintenance of protein homeostasis by removing misfolded or damaged proteins that could impair cellular functions, and by removing proteins whose functions are no longer required. Associated with the PA200 or PA28, the 20S proteasome mediates ubiquitin-independent protein degradation. This type of proteolysis is required in several pathways including spermatogenesis (20S-PA200 complex) or generation of a subset of MHC class I-presented antigenic peptides (20S-PA28 complex). Within the 20S core complex, PSMB6 displays a peptidylglutamyl-hydrolizing activity also termed postacidic or caspase-like activity, meaning that the peptides bond hydrolysis occurs directly after acidic residues. The protein is Proteasome subunit beta type-6 of Homo sapiens (Human).